The following is a 478-amino-acid chain: Sulfate adenylyltransferase subunit 1 (478 aa).

The 217-residue stretch at 24-240 (KSLLRFLTCG…VLENVDIDAD (217 aa)) folds into the tr-type G domain. Residues 33–40 (GSVDDGKS) form a G1 region. A GTP-binding site is contributed by 33–40 (GSVDDGKS). Residues 91–95 (GITID) are G2. Positions 112 to 115 (DTPG) are G3. Residues 112 to 116 (DTPGH) and 167 to 170 (NKMD) each bind GTP. The tract at residues 167–170 (NKMD) is G4. Residues 206-208 (SAL) form a G5 region.

It belongs to the TRAFAC class translation factor GTPase superfamily. Classic translation factor GTPase family. CysN/NodQ subfamily. Heterodimer composed of CysD, the smaller subunit, and CysN.

It carries out the reaction sulfate + ATP + H(+) = adenosine 5'-phosphosulfate + diphosphate. It participates in sulfur metabolism; hydrogen sulfide biosynthesis; sulfite from sulfate: step 1/3. In terms of biological role, with CysD forms the ATP sulfurylase (ATPS) that catalyzes the adenylation of sulfate producing adenosine 5'-phosphosulfate (APS) and diphosphate, the first enzymatic step in sulfur assimilation pathway. APS synthesis involves the formation of a high-energy phosphoric-sulfuric acid anhydride bond driven by GTP hydrolysis by CysN coupled to ATP hydrolysis by CysD. The chain is Sulfate adenylyltransferase subunit 1 from Aliivibrio fischeri (strain MJ11) (Vibrio fischeri).